The following is a 138-amino-acid chain: Protein NrdI (138 aa).

It belongs to the NrdI family.

Probably involved in ribonucleotide reductase function. The polypeptide is Protein NrdI (Mycobacterium leprae (strain TN)).